Here is a 382-residue protein sequence, read N- to C-terminus: MEAVERVNLLGLDGAALSELVGQWGGKPFRARQLQRWVHQRGADSFDAMTDLARDFRAQLARDCVIEALPVNTEQRSSDGTRKWLFDVGQGNAIETVFIPEDDRGTLCISSQAGCVVNCRFCSTGHQGFNRNLRASEIIGQLWWAKRVLEAAADTARLPGGKAGEDTRVISNVVMMGMGEPLLNYDQVLPALRLMLDDNAYGLSRRRVTVSTSGVVPMMDRLSQDCPVALAVSLHAPNDALRDELVPLNKKYPLNALLAACERYLAHAPRDFITFEYCMLDGINDTDQHARELIQLARQVRCKLNLIPFNPFPASGLKRSPSARVRVFAQRLMDAGIVTTVRKTRGDDIDAACGQLAGEVRDRTRITERNATRTIPIQQVHA.

E95 acts as the Proton acceptor in catalysis. Residues 101–348 (EDDRGTLCIS…TTVRKTRGDD (248 aa)) enclose the Radical SAM core domain. Residues C108 and C353 are joined by a disulfide bond. The [4Fe-4S] cluster site is built by C115, C119, and C122. S-adenosyl-L-methionine is bound by residues 179-180 (GE), S211, 233-235 (SLH), and N310. The active-site S-methylcysteine intermediate is C353.

This sequence belongs to the radical SAM superfamily. RlmN family. [4Fe-4S] cluster serves as cofactor.

The protein resides in the cytoplasm. The enzyme catalyses adenosine(2503) in 23S rRNA + 2 reduced [2Fe-2S]-[ferredoxin] + 2 S-adenosyl-L-methionine = 2-methyladenosine(2503) in 23S rRNA + 5'-deoxyadenosine + L-methionine + 2 oxidized [2Fe-2S]-[ferredoxin] + S-adenosyl-L-homocysteine. It catalyses the reaction adenosine(37) in tRNA + 2 reduced [2Fe-2S]-[ferredoxin] + 2 S-adenosyl-L-methionine = 2-methyladenosine(37) in tRNA + 5'-deoxyadenosine + L-methionine + 2 oxidized [2Fe-2S]-[ferredoxin] + S-adenosyl-L-homocysteine. In terms of biological role, specifically methylates position 2 of adenine 2503 in 23S rRNA and position 2 of adenine 37 in tRNAs. m2A2503 modification seems to play a crucial role in the proofreading step occurring at the peptidyl transferase center and thus would serve to optimize ribosomal fidelity. The sequence is that of Dual-specificity RNA methyltransferase RlmN from Bordetella pertussis (strain Tohama I / ATCC BAA-589 / NCTC 13251).